Here is a 401-residue protein sequence, read N- to C-terminus: uncharacterized protein (401 aa).

4 residues coordinate [4Fe-4S] cluster: cysteine 7, cysteine 13, cysteine 16, and cysteine 94. S-adenosyl-L-methionine is bound by residues glutamine 230, tyrosine 259, glutamate 280, and aspartate 328. The active-site Nucleophile is cysteine 355.

Belongs to the class I-like SAM-binding methyltransferase superfamily. RNA M5U methyltransferase family.

This is an uncharacterized protein from Chlamydia caviae (strain ATCC VR-813 / DSM 19441 / 03DC25 / GPIC) (Chlamydophila caviae).